Consider the following 276-residue polypeptide: Inositol-1-monophosphatase ImpA (276 aa).

Glu-74, Asp-90, Ile-92, and Asp-93 together coordinate Mg(2+). A substrate-binding site is contributed by Glu-74. Residues 92 to 95 (IDGT), Arg-192, and Asp-221 each bind substrate. Residue Asp-221 participates in Mg(2+) binding.

It belongs to the inositol monophosphatase superfamily. Requires Mg(2+) as cofactor.

It carries out the reaction a myo-inositol phosphate + H2O = myo-inositol + phosphate. The protein operates within polyol metabolism; myo-inositol biosynthesis; myo-inositol from D-glucose 6-phosphate: step 2/2. Its function is as follows. Catalyzes the dephosphorylation of inositol 1-phosphate (I-1-P) to yield free myo-inositol, a key metabolite in mycobacteria. In Mycolicibacterium smegmatis (strain ATCC 700084 / mc(2)155) (Mycobacterium smegmatis), this protein is Inositol-1-monophosphatase ImpA (impA).